The chain runs to 293 residues: 4-hydroxy-tetrahydrodipicolinate synthase (293 aa).

Thr45 contributes to the pyruvate binding site. The active-site Proton donor/acceptor is the Tyr133. Lys162 functions as the Schiff-base intermediate with substrate in the catalytic mechanism. Ile204 provides a ligand contact to pyruvate.

The protein belongs to the DapA family. Homotetramer; dimer of dimers.

Its subcellular location is the cytoplasm. The catalysed reaction is L-aspartate 4-semialdehyde + pyruvate = (2S,4S)-4-hydroxy-2,3,4,5-tetrahydrodipicolinate + H2O + H(+). It participates in amino-acid biosynthesis; L-lysine biosynthesis via DAP pathway; (S)-tetrahydrodipicolinate from L-aspartate: step 3/4. Its function is as follows. Catalyzes the condensation of (S)-aspartate-beta-semialdehyde [(S)-ASA] and pyruvate to 4-hydroxy-tetrahydrodipicolinate (HTPA). This Mesorhizobium japonicum (strain LMG 29417 / CECT 9101 / MAFF 303099) (Mesorhizobium loti (strain MAFF 303099)) protein is 4-hydroxy-tetrahydrodipicolinate synthase.